The sequence spans 160 residues: MSGDGIPSLSVGDASGISLAIVASTWHDQICTALLEGAQRVATEAGIDRPTVVRVLGAIEIPVVAQALARTHDAVVALGVVIQGETPHFGYVCDAVTTGLTRVSLDTSTPVANGVLTVNNEQQAIDRAGLPGSAEDKGAQAAAAALDTALTLRRLRQPWA.

5-amino-6-(D-ribitylamino)uracil-binding positions include Trp-26, 58 to 60 (AIE), and 80 to 82 (VVI). 85-86 (ET) lines the (2S)-2-hydroxy-3-oxobutyl phosphate pocket. His-88 acts as the Proton donor in catalysis. Asn-113 contributes to the 5-amino-6-(D-ribitylamino)uracil binding site. A (2S)-2-hydroxy-3-oxobutyl phosphate-binding site is contributed by Arg-127.

This sequence belongs to the DMRL synthase family. In terms of assembly, homopentamer.

It catalyses the reaction (2S)-2-hydroxy-3-oxobutyl phosphate + 5-amino-6-(D-ribitylamino)uracil = 6,7-dimethyl-8-(1-D-ribityl)lumazine + phosphate + 2 H2O + H(+). It participates in cofactor biosynthesis; riboflavin biosynthesis; riboflavin from 2-hydroxy-3-oxobutyl phosphate and 5-amino-6-(D-ribitylamino)uracil: step 1/2. Catalyzes the formation of 6,7-dimethyl-8-ribityllumazine by condensation of 5-amino-6-(D-ribitylamino)uracil with 3,4-dihydroxy-2-butanone 4-phosphate. This is the penultimate step in the biosynthesis of riboflavin. The protein is 6,7-dimethyl-8-ribityllumazine synthase of Mycobacteroides abscessus (strain ATCC 19977 / DSM 44196 / CCUG 20993 / CIP 104536 / JCM 13569 / NCTC 13031 / TMC 1543 / L948) (Mycobacterium abscessus).